A 423-amino-acid polypeptide reads, in one-letter code: Serine--tRNA ligase (423 aa).

An L-serine-binding site is contributed by 230–232 (TAE). Residue 261–263 (RSE) participates in ATP binding. Position 284 (E284) interacts with L-serine. 348–351 (EISS) is a binding site for ATP. S384 is a binding site for L-serine.

Belongs to the class-II aminoacyl-tRNA synthetase family. Type-1 seryl-tRNA synthetase subfamily. As to quaternary structure, homodimer. The tRNA molecule binds across the dimer.

The protein resides in the cytoplasm. The catalysed reaction is tRNA(Ser) + L-serine + ATP = L-seryl-tRNA(Ser) + AMP + diphosphate + H(+). It carries out the reaction tRNA(Sec) + L-serine + ATP = L-seryl-tRNA(Sec) + AMP + diphosphate + H(+). It functions in the pathway aminoacyl-tRNA biosynthesis; selenocysteinyl-tRNA(Sec) biosynthesis; L-seryl-tRNA(Sec) from L-serine and tRNA(Sec): step 1/1. Its function is as follows. Catalyzes the attachment of serine to tRNA(Ser). Is also able to aminoacylate tRNA(Sec) with serine, to form the misacylated tRNA L-seryl-tRNA(Sec), which will be further converted into selenocysteinyl-tRNA(Sec). The chain is Serine--tRNA ligase from Syntrophobacter fumaroxidans (strain DSM 10017 / MPOB).